Here is a 160-residue protein sequence, read N- to C-terminus: Cyclic pyranopterin monophosphate synthase (160 aa).

Substrate is bound by residues 73-75 (LCH) and 110-111 (ME). Asp125 is an active-site residue.

The protein belongs to the MoaC family. Homohexamer; trimer of dimers.

It carries out the reaction (8S)-3',8-cyclo-7,8-dihydroguanosine 5'-triphosphate = cyclic pyranopterin phosphate + diphosphate. Its pathway is cofactor biosynthesis; molybdopterin biosynthesis. In terms of biological role, catalyzes the conversion of (8S)-3',8-cyclo-7,8-dihydroguanosine 5'-triphosphate to cyclic pyranopterin monophosphate (cPMP). In Pseudomonas paraeruginosa (strain DSM 24068 / PA7) (Pseudomonas aeruginosa (strain PA7)), this protein is Cyclic pyranopterin monophosphate synthase.